The following is a 360-amino-acid chain: GTPase Obg (360 aa).

In terms of domain architecture, Obg spans 1 to 156; that stretch reads MFVDSVEIII…KCVRLELKLI (156 aa). Residues 157-360 enclose the OBG-type G domain; sequence ADIGLVGFPN…LKFVLLEALP (204 aa). GTP contacts are provided by residues 163-170, 188-192, 210-213, 279-282, and 341-343; these read GFPNAGKS, FTTLV, DIPG, NKCD, and SAV. Residues serine 170 and threonine 190 each contribute to the Mg(2+) site.

This sequence belongs to the TRAFAC class OBG-HflX-like GTPase superfamily. OBG GTPase family. In terms of assembly, monomer. Mg(2+) is required as a cofactor.

The protein resides in the cytoplasm. Functionally, an essential GTPase which binds GTP, GDP and possibly (p)ppGpp with moderate affinity, with high nucleotide exchange rates and a fairly low GTP hydrolysis rate. Plays a role in control of the cell cycle, stress response, ribosome biogenesis and in those bacteria that undergo differentiation, in morphogenesis control. The sequence is that of GTPase Obg from Helicobacter acinonychis (strain Sheeba).